Consider the following 226-residue polypeptide: ATP synthase F(0) complex subunit a (226 aa).

The next 6 membrane-spanning stretches (helical) occupy residues 12 to 32 (PTMM…ILFP), 68 to 88 (WALM…LGLL), 97 to 117 (QLSM…ITGF), 138 to 158 (IPML…ALAV), 164 to 184 (ITAG…LMNI), and 200 to 222 (TILE…SLYL).

It belongs to the ATPase A chain family. Component of the ATP synthase complex composed at least of ATP5F1A/subunit alpha, ATP5F1B/subunit beta, ATP5MC1/subunit c (homooctomer), MT-ATP6/subunit a, MT-ATP8/subunit 8, ATP5ME/subunit e, ATP5MF/subunit f, ATP5MG/subunit g, ATP5MK/subunit k, ATP5MJ/subunit j, ATP5F1C/subunit gamma, ATP5F1D/subunit delta, ATP5F1E/subunit epsilon, ATP5PF/subunit F6, ATP5PB/subunit b, ATP5PD/subunit d, ATP5PO/subunit OSCP. ATP synthase complex consists of a soluble F(1) head domain (subunits alpha(3) and beta(3)) - the catalytic core - and a membrane F(0) domain - the membrane proton channel (subunits c, a, 8, e, f, g, k and j). These two domains are linked by a central stalk (subunits gamma, delta, and epsilon) rotating inside the F1 region and a stationary peripheral stalk (subunits F6, b, d, and OSCP). Interacts with DNAJC30; interaction is direct.

The protein resides in the mitochondrion inner membrane. The catalysed reaction is H(+)(in) = H(+)(out). Its function is as follows. Subunit a, of the mitochondrial membrane ATP synthase complex (F(1)F(0) ATP synthase or Complex V) that produces ATP from ADP in the presence of a proton gradient across the membrane which is generated by electron transport complexes of the respiratory chain. ATP synthase complex consist of a soluble F(1) head domain - the catalytic core - and a membrane F(1) domain - the membrane proton channel. These two domains are linked by a central stalk rotating inside the F(1) region and a stationary peripheral stalk. During catalysis, ATP synthesis in the catalytic domain of F(1) is coupled via a rotary mechanism of the central stalk subunits to proton translocation. With the subunit c (ATP5MC1), forms the proton-conducting channel in the F(0) domain, that contains two crucial half-channels (inlet and outlet) that facilitate proton movement from the mitochondrial intermembrane space (IMS) into the matrix. Protons are taken up via the inlet half-channel and released through the outlet half-channel, following a Grotthuss mechanism. In Felis catus (Cat), this protein is ATP synthase F(0) complex subunit a.